The chain runs to 348 residues: Protein RecA (348 aa).

65–72 (GPESSGKT) contributes to the ATP binding site.

The protein belongs to the RecA family.

It is found in the cytoplasm. Can catalyze the hydrolysis of ATP in the presence of single-stranded DNA, the ATP-dependent uptake of single-stranded DNA by duplex DNA, and the ATP-dependent hybridization of homologous single-stranded DNAs. It interacts with LexA causing its activation and leading to its autocatalytic cleavage. In Vibrio anguillarum (strain ATCC 68554 / 775) (Listonella anguillarum), this protein is Protein RecA.